Reading from the N-terminus, the 58-residue chain is Keratin-associated protein 19-6 (58 aa).

This sequence belongs to the KRTAP type 19 family. As to quaternary structure, interacts with hair keratins.

Its function is as follows. In the hair cortex, hair keratin intermediate filaments are embedded in an interfilamentous matrix, consisting of hair keratin-associated proteins (KRTAP), which are essential for the formation of a rigid and resistant hair shaft through their extensive disulfide bond cross-linking with abundant cysteine residues of hair keratins. The matrix proteins include the high-sulfur and high-glycine-tyrosine keratins. In Homo sapiens (Human), this protein is Keratin-associated protein 19-6 (KRTAP19-6).